We begin with the raw amino-acid sequence, 562 residues long: Protein wntless (562 aa).

The Cytoplasmic portion of the chain corresponds to 1-13; sequence MSGTILENLSGRK. A helical transmembrane segment spans residues 14-34; that stretch reads LSILVATLLLCQVLCFLLGGL. Residues 35-239 are Lumenal-facing; the sequence is YAPLPAGHVT…AIHQNGGFTQ (205 aa). Residue asparagine 58 is glycosylated (N-linked (GlcNAc...) asparagine). A helical membrane pass occupies residues 240-260; sequence IWLLLKTMLFPFVVGIMIWFW. At 261–270 the chain is on the cytoplasmic side; the sequence is RRVHLLQRSP. A helical membrane pass occupies residues 271–291; sequence ALLEYMLIYLGAALTFLNLPL. Topologically, residues 292–311 are lumenal; that stretch reads EYLSLVYEMPYMLLLSDIRQ. The helical transmembrane segment at 312–332 threads the bilayer; it reads GIFYAMLLTFWLVFAGEHMLI. The Cytoplasmic segment spans residues 333–344; sequence QDAPNKSTIRSR. The chain crosses the membrane as a helical span at residues 345-365; that stretch reads YWKHLSAVVVGCISLFVFDIC. Residues 366-390 lie on the Lumenal side of the membrane; sequence ERGVQLRNPFYSIWTTPLGAKVAMT. A helical transmembrane segment spans residues 391–411; sequence FIVLAGVSAAIYFLFLCYMIW. The Cytoplasmic segment spans residues 412–441; sequence KVFRNIGDKRTSLPSMSQARRLHYEGLIYR. The helical transmembrane segment at 442-462 threads the bilayer; that stretch reads FKFLMLATLVCAALTVAGFIM. Residues 463–482 lie on the Lumenal side of the membrane; the sequence is GQMAEGQWDWNDNVAIQPTS. A helical membrane pass occupies residues 483-503; that stretch reads AFLTGVYGMWNIYIFALLILY. Residues 504-562 are Cytoplasmic-facing; that stretch reads APSHKQWPAMHHSDETTQSNENIVASAASEEIEFSHLPSDSNPSEISSLTSFTRKVAFD.

It belongs to the wntless family. Interacts with wg; in the Golgi. Interacts with Vps35, a component of the retromer complex; wls stability is regulated by Vps35.

It is found in the presynaptic cell membrane. The protein localises to the postsynaptic cell membrane. The protein resides in the cell membrane. It localises to the endoplasmic reticulum membrane. Its subcellular location is the endosome membrane. It is found in the golgi apparatus membrane. A segment polarity gene required for wingless (wg)-dependent patterning processes, acting in both wg-sending cells and wg-target cells. In non-neuronal cells wls directs wg secretion. The wls traffic loop encompasses the Golgi, the cell surface, an endocytic compartment and a retrograde route leading back to the Golgi, and involves clathrin-mediated endocytosis and the retromer complex (a conserved protein complex consisting of Vps35 and Vps26). In neuronal cells (the larval motorneuron NMJ), the wg signal moves across the synapse via the release of wls-containing exosome-like vesicles. Postsynaptic wls is required for the trafficking of fz2 through the fz2-interacting protein Grip. This is Protein wntless from Drosophila sechellia (Fruit fly).